The chain runs to 647 residues: Threonine--tRNA ligase (647 aa).

The region spanning 1–61 (MIKITFPDGA…EEDGSIEIVT (61 aa)) is the TGS domain. Positions 240–538 (DHRKLGKELD…LIETYKGAFP (299 aa)) are catalytic. Zn(2+)-binding residues include cysteine 334, histidine 385, and histidine 515.

It belongs to the class-II aminoacyl-tRNA synthetase family. As to quaternary structure, homodimer. Zn(2+) serves as cofactor.

It localises to the cytoplasm. The enzyme catalyses tRNA(Thr) + L-threonine + ATP = L-threonyl-tRNA(Thr) + AMP + diphosphate + H(+). Catalyzes the attachment of threonine to tRNA(Thr) in a two-step reaction: L-threonine is first activated by ATP to form Thr-AMP and then transferred to the acceptor end of tRNA(Thr). Also edits incorrectly charged L-seryl-tRNA(Thr). This chain is Threonine--tRNA ligase, found in Streptococcus pyogenes serotype M4 (strain MGAS10750).